The primary structure comprises 123 residues: Small ribosomal subunit protein uS12 (123 aa).

D89 is modified (3-methylthioaspartic acid).

This sequence belongs to the universal ribosomal protein uS12 family. Part of the 30S ribosomal subunit. Contacts proteins S8 and S17. May interact with IF1 in the 30S initiation complex.

With S4 and S5 plays an important role in translational accuracy. Functionally, interacts with and stabilizes bases of the 16S rRNA that are involved in tRNA selection in the A site and with the mRNA backbone. Located at the interface of the 30S and 50S subunits, it traverses the body of the 30S subunit contacting proteins on the other side and probably holding the rRNA structure together. The combined cluster of proteins S8, S12 and S17 appears to hold together the shoulder and platform of the 30S subunit. The protein is Small ribosomal subunit protein uS12 of Orientia tsutsugamushi (strain Boryong) (Rickettsia tsutsugamushi).